A 455-amino-acid chain; its full sequence is Bifunctional protein GlmU (455 aa).

The interval 1-227 (MGLSVIILAA…CEEVQGVNDR (227 aa)) is pyrophosphorylase. UDP-N-acetyl-alpha-D-glucosamine contacts are provided by residues 8-11 (LAAG), Lys22, Gln73, 78-79 (GT), 100-102 (YGD), Gly137, Glu152, Asn167, and Asn225. Residue Asp102 coordinates Mg(2+). Residue Asn225 participates in Mg(2+) binding. Residues 228 to 248 (WELTKLERYYQRLMAKKLSLA) are linker. The N-acetyltransferase stretch occupies residues 249–455 (GVTIIDPERF…KGWHRPTKKE (207 aa)). Arg332 and Lys350 together coordinate UDP-N-acetyl-alpha-D-glucosamine. Catalysis depends on His362, which acts as the Proton acceptor. Tyr365 and Asn376 together coordinate UDP-N-acetyl-alpha-D-glucosamine. Acetyl-CoA contacts are provided by residues Ala379, 385-386 (NY), Ser404, Ala422, and Arg439.

It in the N-terminal section; belongs to the N-acetylglucosamine-1-phosphate uridyltransferase family. The protein in the C-terminal section; belongs to the transferase hexapeptide repeat family. In terms of assembly, homotrimer. Mg(2+) is required as a cofactor.

It is found in the cytoplasm. The catalysed reaction is alpha-D-glucosamine 1-phosphate + acetyl-CoA = N-acetyl-alpha-D-glucosamine 1-phosphate + CoA + H(+). It carries out the reaction N-acetyl-alpha-D-glucosamine 1-phosphate + UTP + H(+) = UDP-N-acetyl-alpha-D-glucosamine + diphosphate. It participates in nucleotide-sugar biosynthesis; UDP-N-acetyl-alpha-D-glucosamine biosynthesis; N-acetyl-alpha-D-glucosamine 1-phosphate from alpha-D-glucosamine 6-phosphate (route II): step 2/2. It functions in the pathway nucleotide-sugar biosynthesis; UDP-N-acetyl-alpha-D-glucosamine biosynthesis; UDP-N-acetyl-alpha-D-glucosamine from N-acetyl-alpha-D-glucosamine 1-phosphate: step 1/1. Its pathway is bacterial outer membrane biogenesis; LPS lipid A biosynthesis. In terms of biological role, catalyzes the last two sequential reactions in the de novo biosynthetic pathway for UDP-N-acetylglucosamine (UDP-GlcNAc). The C-terminal domain catalyzes the transfer of acetyl group from acetyl coenzyme A to glucosamine-1-phosphate (GlcN-1-P) to produce N-acetylglucosamine-1-phosphate (GlcNAc-1-P), which is converted into UDP-GlcNAc by the transfer of uridine 5-monophosphate (from uridine 5-triphosphate), a reaction catalyzed by the N-terminal domain. The polypeptide is Bifunctional protein GlmU (Coxiella burnetii (strain CbuK_Q154) (Coxiella burnetii (strain Q154))).